The primary structure comprises 185 residues: NADH-quinone oxidoreductase subunit B (185 aa).

Residues Cys-38, Cys-39, Cys-104, and Cys-133 each contribute to the [4Fe-4S] cluster site. Residues 165–176 (AAEAYREEERQA) show a composition bias toward basic and acidic residues. Residues 165-185 (AAEAYREEERQAARSALGPRS) are disordered.

Belongs to the complex I 20 kDa subunit family. As to quaternary structure, NDH-1 is composed of 14 different subunits. Subunits NuoB, C, D, E, F, and G constitute the peripheral sector of the complex. The cofactor is [4Fe-4S] cluster.

Its subcellular location is the cell membrane. The enzyme catalyses a quinone + NADH + 5 H(+)(in) = a quinol + NAD(+) + 4 H(+)(out). NDH-1 shuttles electrons from NADH, via FMN and iron-sulfur (Fe-S) centers, to quinones in the respiratory chain. The immediate electron acceptor for the enzyme in this species is believed to be ubiquinone. Couples the redox reaction to proton translocation (for every two electrons transferred, four hydrogen ions are translocated across the cytoplasmic membrane), and thus conserves the redox energy in a proton gradient. The chain is NADH-quinone oxidoreductase subunit B from Thermomicrobium roseum (strain ATCC 27502 / DSM 5159 / P-2).